The primary structure comprises 280 residues: MNKKIAIVTGASSGFGLLAAVKLARSFFVIATSRQPEKAEQLRELAAAHNVSDSIHITALDVTDEQSIVSFGKAVSAYAPIDLLVNNAGTAYGGFIEDVPMEHFRQQFETNVFGVIHVTKTVLPYIRKHGGAKIINVSSISGLTGFPALSPYVSSKHALEGFSESLRIELLPFGIETALIEPGSYKTSIWSTSLSNFMSVPADDSAYHQYYKKILSYVQKNGEESGDPQEVADLIYQLATKQHIKNLRYPIGKGIKLTLLFRSLFPWSAWESILKKKLFS.

3–29 (KKIAIVTGASSGFGLLAAVKLARSFFV) lines the NADP(+) pocket. Residue serine 139 participates in substrate binding. Residue tyrosine 152 is the Proton acceptor of the active site.

Belongs to the short-chain dehydrogenases/reductases (SDR) family.

This is an uncharacterized protein from Bacillus subtilis (strain 168).